A 395-amino-acid polypeptide reads, in one-letter code: F-box/kelch-repeat protein At3g13680 (395 aa).

In terms of domain architecture, F-box spans 1-47 (MTTMGDLPGDLVEEILSRVPLTSLRAIRSTCQKWNSLSKSQICGRKA). Kelch repeat units lie at residues 154–202 (ILRI…SLKG), 210–256 (KKET…VSLA), 265–314 (VLYQ…FIDE), and 337–383 (IVYI…LVQL).

This Arabidopsis thaliana (Mouse-ear cress) protein is F-box/kelch-repeat protein At3g13680.